Here is a 315-residue protein sequence, read N- to C-terminus: 4-hydroxy-3-methylbut-2-enyl diphosphate reductase (315 aa).

Cys12 contributes to the [4Fe-4S] cluster binding site. (2E)-4-hydroxy-3-methylbut-2-enyl diphosphate is bound by residues His41 and His74. The dimethylallyl diphosphate site is built by His41 and His74. Isopentenyl diphosphate contacts are provided by His41 and His74. Cys96 is a [4Fe-4S] cluster binding site. His124 contacts (2E)-4-hydroxy-3-methylbut-2-enyl diphosphate. His124 contributes to the dimethylallyl diphosphate binding site. His124 contacts isopentenyl diphosphate. Glu126 functions as the Proton donor in the catalytic mechanism. Position 168 (Thr168) interacts with (2E)-4-hydroxy-3-methylbut-2-enyl diphosphate. Cys198 serves as a coordination point for [4Fe-4S] cluster. Positions 226, 227, 228, and 270 each coordinate (2E)-4-hydroxy-3-methylbut-2-enyl diphosphate. The dimethylallyl diphosphate site is built by Ser226, Ser227, Asn228, and Ser270. Isopentenyl diphosphate-binding residues include Ser226, Ser227, Asn228, and Ser270.

It belongs to the IspH family. [4Fe-4S] cluster is required as a cofactor.

It catalyses the reaction isopentenyl diphosphate + 2 oxidized [2Fe-2S]-[ferredoxin] + H2O = (2E)-4-hydroxy-3-methylbut-2-enyl diphosphate + 2 reduced [2Fe-2S]-[ferredoxin] + 2 H(+). It carries out the reaction dimethylallyl diphosphate + 2 oxidized [2Fe-2S]-[ferredoxin] + H2O = (2E)-4-hydroxy-3-methylbut-2-enyl diphosphate + 2 reduced [2Fe-2S]-[ferredoxin] + 2 H(+). The protein operates within isoprenoid biosynthesis; dimethylallyl diphosphate biosynthesis; dimethylallyl diphosphate from (2E)-4-hydroxy-3-methylbutenyl diphosphate: step 1/1. It functions in the pathway isoprenoid biosynthesis; isopentenyl diphosphate biosynthesis via DXP pathway; isopentenyl diphosphate from 1-deoxy-D-xylulose 5-phosphate: step 6/6. Its function is as follows. Catalyzes the conversion of 1-hydroxy-2-methyl-2-(E)-butenyl 4-diphosphate (HMBPP) into a mixture of isopentenyl diphosphate (IPP) and dimethylallyl diphosphate (DMAPP). Acts in the terminal step of the DOXP/MEP pathway for isoprenoid precursor biosynthesis. The sequence is that of 4-hydroxy-3-methylbut-2-enyl diphosphate reductase from Pseudomonas entomophila (strain L48).